A 182-amino-acid polypeptide reads, in one-letter code: Inner membrane-spanning protein YciB (182 aa).

Helical transmembrane passes span 22-42 (IYIA…VTYA), 50-70 (MHLI…IFHD), 72-92 (AFIK…LAVS), 118-138 (VTWY…YVAF), and 148-168 (FKVF…VVYL).

The protein belongs to the YciB family.

The protein resides in the cell inner membrane. Its function is as follows. Plays a role in cell envelope biogenesis, maintenance of cell envelope integrity and membrane homeostasis. This chain is Inner membrane-spanning protein YciB, found in Shewanella woodyi (strain ATCC 51908 / MS32).